Reading from the N-terminus, the 59-residue chain is Large ribosomal subunit protein eL29 (59 aa).

The segment covering 1 to 26 (MAKSKNHTAHNQTRKAHRNGIKKPKT) has biased composition (basic residues). The segment at 1-37 (MAKSKNHTAHNQTRKAHRNGIKKPKTYKYPSLKGVDP) is disordered. Residue Lys-52 forms a Glycyl lysine isopeptide (Lys-Gly) (interchain with G-Cter in ubiquitin) linkage.

Belongs to the eukaryotic ribosomal protein eL29 family. As to quaternary structure, component of the large ribosomal subunit (LSU). Mature yeast ribosomes consist of a small (40S) and a large (60S) subunit. The 40S small subunit contains 1 molecule of ribosomal RNA (18S rRNA) and 33 different proteins (encoded by 57 genes). The large 60S subunit contains 3 rRNA molecules (25S, 5.8S and 5S rRNA) and 46 different proteins (encoded by 81 genes).

The protein resides in the cytoplasm. Component of the ribosome, a large ribonucleoprotein complex responsible for the synthesis of proteins in the cell. The small ribosomal subunit (SSU) binds messenger RNAs (mRNAs) and translates the encoded message by selecting cognate aminoacyl-transfer RNA (tRNA) molecules. The large subunit (LSU) contains the ribosomal catalytic site termed the peptidyl transferase center (PTC), which catalyzes the formation of peptide bonds, thereby polymerizing the amino acids delivered by tRNAs into a polypeptide chain. The nascent polypeptides leave the ribosome through a tunnel in the LSU and interact with protein factors that function in enzymatic processing, targeting, and the membrane insertion of nascent chains at the exit of the ribosomal tunnel. This chain is Large ribosomal subunit protein eL29, found in Saccharomyces cerevisiae (strain ATCC 204508 / S288c) (Baker's yeast).